Reading from the N-terminus, the 439-residue chain is Chromosomal replication initiator protein DnaA (439 aa).

The tract at residues 1-75 (MESWSRCLER…GIREVVLAIG (75 aa)) is domain I, interacts with DnaA modulators. Residues 75–101 (GSRPKTTELTVPVDTTGRLSQTVPFNG) form a domain II region. The domain III, AAA+ region stretch occupies residues 102–319 (NLDTHYNFDN…GALNTLVARA (218 aa)). Gly147, Gly149, Lys150, and Thr151 together coordinate ATP. The segment at 320 to 439 (NFTGRAVTIE…WDKLMRKFSE (120 aa)) is domain IV, binds dsDNA.

The protein belongs to the DnaA family. In terms of assembly, oligomerizes as a right-handed, spiral filament on DNA at oriC.

The protein resides in the cytoplasm. Plays an essential role in the initiation and regulation of chromosomal replication. ATP-DnaA binds to the origin of replication (oriC) to initiate formation of the DNA replication initiation complex once per cell cycle. Binds the DnaA box (a 9 base pair repeat at the origin) and separates the double-stranded (ds)DNA. Forms a right-handed helical filament on oriC DNA; dsDNA binds to the exterior of the filament while single-stranded (ss)DNA is stabiized in the filament's interior. The ATP-DnaA-oriC complex binds and stabilizes one strand of the AT-rich DNA unwinding element (DUE), permitting loading of DNA polymerase. After initiation quickly degrades to an ADP-DnaA complex that is not apt for DNA replication. Binds acidic phospholipids. The chain is Chromosomal replication initiator protein DnaA from Xylella fastidiosa (strain Temecula1 / ATCC 700964).